The chain runs to 135 residues: DNA-directed RNA polymerase subunit omega (135 aa).

The disordered stretch occupies residues 84 to 106; the sequence is IAGHSSHVSPSRSSRHTGLGKSF.

It belongs to the RNA polymerase subunit omega family. The RNAP catalytic core consists of 2 alpha, 1 beta, 1 beta' and 1 omega subunit. When a sigma factor is associated with the core the holoenzyme is formed, which can initiate transcription.

The catalysed reaction is RNA(n) + a ribonucleoside 5'-triphosphate = RNA(n+1) + diphosphate. Its function is as follows. Promotes RNA polymerase assembly. Latches the N- and C-terminal regions of the beta' subunit thereby facilitating its interaction with the beta and alpha subunits. This is DNA-directed RNA polymerase subunit omega from Anaplasma phagocytophilum (strain HZ).